We begin with the raw amino-acid sequence, 612 residues long: 1,8-cineole synthase, chloroplastic (612 aa).

Residues Met1–Thr52 constitute a chloroplast transit peptide. Residues Asp363, Asp367, and Asp515 each coordinate Mg(2+). Positions Asp363–Asp367 match the DDXXD motif motif.

It belongs to the terpene synthase family. Tpsd subfamily. Mg(2+) serves as cofactor. It depends on Mn(2+) as a cofactor.

It localises to the plastid. Its subcellular location is the chloroplast. It carries out the reaction (2E)-geranyl diphosphate + H2O = 1,8-cineole + diphosphate. Its pathway is terpene metabolism; oleoresin biosynthesis. Terpene synthase (TPS) involved in the biosynthesis of monoterpene natural products included in conifer oleoresin secretions and volatile emissions; these compounds contribute to biotic and abiotic stress defense against herbivores and pathogens. Catalyzes the conversion of (2E)-geranyl diphosphate (GPP) to 1,8-cineole. The sequence is that of 1,8-cineole synthase, chloroplastic from Picea engelmannii x Picea glauca (Hybrid white spruce).